We begin with the raw amino-acid sequence, 358 residues long: Src kinase-associated phosphoprotein 2 (358 aa).

2 positions are modified to phosphoserine: S5 and S6. The interval 62-88 (ESQDKGDAEDGEEYDDPFAGPPDTISL) is disordered. A Phosphotyrosine modification is found at Y75. Phosphoserine occurs at positions 87 and 90. Residues 116–219 (FVLKAGYLEK…WVQQLNFVLQ (104 aa)) enclose the PH domain. A phosphotyrosine mark is found at Y151 and Y197. At S223 the chain carries Phosphoserine. Residues 232–254 (ERGELYDDVDHPLPSSSPTRSLP) are disordered. The span at 243 to 253 (PLPSSSPTRSL) shows a compositional bias: low complexity. Y260 is subject to Phosphotyrosine. S282 and S285 each carry phosphoserine. In terms of domain architecture, SH3 spans 296–357 (NYANFYQGLW…PKAYVMEMYD (62 aa)).

This sequence belongs to the SKAP family. As to quaternary structure, interacts with FYB1, which is required for SKAP2 protein stability. Interacts with PTPNS1. Part of a complex consisting of SKAP2, FYB1 and PTPNS1. Part of a complex consisting of SKAP2, FYB1 and LILRB3. Interacts with LAT, GRB2, PTK2B and PRAM1. May interact with actin. May interact with FYN, HCK and LYN. Interacts with FASLG.

It localises to the cytoplasm. In terms of biological role, may be involved in B-cell and macrophage adhesion processes. In B-cells, may act by coupling the B-cell receptor (BCR) to integrin activation. May play a role in src signaling pathway. This chain is Src kinase-associated phosphoprotein 2 (SKAP2), found in Bos taurus (Bovine).